Consider the following 617-residue polypeptide: Putative type VI secretion system protein VgrGB (617 aa).

The interval 449-469 is disordered; the sequence is RTFHATNPSPYPLPASKTRTS.

This sequence belongs to the VgrG protein family.

In terms of biological role, a Vgr protein that is probably part of a type VI secretion system (T6SS). May be required for export of proteins involved in Rhs-mediated cellular contact-dependent growth inhibition (CDI). This is Putative type VI secretion system protein VgrGB (vgrGB) from Dickeya dadantii (strain 3937) (Erwinia chrysanthemi (strain 3937)).